The chain runs to 99 residues: Putative pterin-4-alpha-carbinolamine dehydratase (99 aa).

This sequence belongs to the pterin-4-alpha-carbinolamine dehydratase family.

The enzyme catalyses (4aS,6R)-4a-hydroxy-L-erythro-5,6,7,8-tetrahydrobiopterin = (6R)-L-erythro-6,7-dihydrobiopterin + H2O. This Synechococcus sp. (strain CC9311) protein is Putative pterin-4-alpha-carbinolamine dehydratase.